A 271-amino-acid chain; its full sequence is Dioscorin dioA3 (271 aa).

Positions 1 to 21 are cleaved as a signal peptide; it reads MSSSTLLHLLLLSSLLFSCLS. The Alpha-carbonic anhydrase domain occupies 28–262; sequence DEFSYIEGNP…TNFRSVFYFE (235 aa). C53 and C212 are joined by a disulfide. Residue H94 is the Proton acceptor of the active site. L-ascorbate contacts are provided by residues D95, 120 to 122, Q139, and 208 to 209; these read HFH and TA.

The protein belongs to the alpha-carbonic anhydrase family. In terms of assembly, monomer. Homodimer. Post-translationally, not glycosylated. Expressed in tuber (at protein level).

The enzyme catalyses hydrogencarbonate + H(+) = CO2 + H2O. It carries out the reaction 2 monodehydro-L-ascorbate radical + NADH + H(+) = 2 L-ascorbate + NAD(+). The carbonate dehydratase activity is not substantially changed by the addition of Zn(2+). In terms of biological role, storage protein of tuber. Involved in protection against oxidative stress. Has carbonate dehydratase, trypsin inhibitor, dehydroascorbate (DHA) reductase and monodehydroascorbate (MDA) reductase activities. Catalyzes the reactions of carbonate dehydratase and DHA reductase independently of zinc and glutathione (GSH). The coupled reaction is capable of recycling a plant antioxidant ascorbate using ubiquitous compounds H(2)O and CO(2). Exhibits antioxidant activity. Able to scavenge 1,1-diphenyl-2-picrylhydrazyl (DPPH) radical. Exhibits immunomodulatory activity. Activates Toll-like receptor 4 signaling pathways by up-regulating the gene expression of pro-inflammatory cytokines, such as tumor necrosis factor alpha, interleukin-1 beta and interleukin-6, and chemokines RANTES and MCP-1, in mouse RAW 264.7 macrophages. Stimulates the phagocytosis of E.coli by the LPS-treated mouse macrophages. The polypeptide is Dioscorin dioA3 (Dioscorea japonica (Japanese yam)).